Reading from the N-terminus, the 379-residue chain is Dihydroorotate dehydrogenase (quinone) (379 aa).

Residues 79–83 (AGCDK) and Ala103 contribute to the FMN site. A substrate-binding site is contributed by Lys83. 128-131 (NRLG) contributes to the substrate binding site. Residues Asn160 and Asn193 each coordinate FMN. Asn193 serves as a coordination point for substrate. Ser196 acts as the Nucleophile in catalysis. A substrate-binding site is contributed by Asn198. FMN contacts are provided by Lys231 and Thr259. 260 to 261 (NT) serves as a coordination point for substrate. Residues Gly289, Gly318, and 339 to 340 (YT) contribute to the FMN site.

This sequence belongs to the dihydroorotate dehydrogenase family. Type 2 subfamily. Monomer. FMN is required as a cofactor.

The protein localises to the cell membrane. The catalysed reaction is (S)-dihydroorotate + a quinone = orotate + a quinol. Its pathway is pyrimidine metabolism; UMP biosynthesis via de novo pathway; orotate from (S)-dihydroorotate (quinone route): step 1/1. Catalyzes the conversion of dihydroorotate to orotate with quinone as electron acceptor. The polypeptide is Dihydroorotate dehydrogenase (quinone) (Crocosphaera subtropica (strain ATCC 51142 / BH68) (Cyanothece sp. (strain ATCC 51142))).